Consider the following 360-residue polypeptide: Peptide chain release factor 1 (360 aa).

Position 235 is an N5-methylglutamine (Gln-235). Residues 285 to 313 (KRQQAEASTRRNLLGSGDRSDRNRTYNFP) are disordered.

The protein belongs to the prokaryotic/mitochondrial release factor family. Methylated by PrmC. Methylation increases the termination efficiency of RF1.

The protein localises to the cytoplasm. Its function is as follows. Peptide chain release factor 1 directs the termination of translation in response to the peptide chain termination codons UAG and UAA. The polypeptide is Peptide chain release factor 1 (Shigella boydii serotype 18 (strain CDC 3083-94 / BS512)).